The chain runs to 483 residues: tRNA (guanine(37)-N(1))-methyltransferase (483 aa).

Residues 1–24 (MEEAATLQSLSISSSSPFPNNSSP) are disordered. Residues 9–24 (SLSISSSSPFPNNSSP) are compositionally biased toward low complexity. S-adenosyl-L-methionine-binding positions include His252, 290-291 (DL), and Asn379.

It belongs to the class I-like SAM-binding methyltransferase superfamily. TRM5/TYW2 family. In terms of assembly, monomer.

The protein resides in the mitochondrion matrix. It localises to the nucleus. It is found in the cytoplasm. The catalysed reaction is guanosine(37) in tRNA + S-adenosyl-L-methionine = N(1)-methylguanosine(37) in tRNA + S-adenosyl-L-homocysteine + H(+). Specifically methylates the N1 position of guanosine-37 in various cytoplasmic and mitochondrial tRNAs. Methylation is not dependent on the nature of the nucleoside 5' of the target nucleoside. This is the first step in the biosynthesis of wybutosine (yW), a modified base adjacent to the anticodon of tRNAs and required for accurate decoding. This is tRNA (guanine(37)-N(1))-methyltransferase from Ajellomyces capsulatus (strain G186AR / H82 / ATCC MYA-2454 / RMSCC 2432) (Darling's disease fungus).